The sequence spans 517 residues: FAD-dependent monooxygenase FUP4 (517 aa).

The N-terminal stretch at 1–19 (MRQSSTLTWTSVLLAPLAA) is a signal peptide. One can recognise an FAD-binding PCMH-type domain in the interval 75–246 (QALRPACLVH…TRFDLDLYDQ (172 aa)). A Pros-8alpha-FAD histidine modification is found at histidine 112. Asparagine 163, asparagine 208, and asparagine 346 each carry an N-linked (GlcNAc...) asparagine glycan.

It belongs to the oxygen-dependent FAD-linked oxidoreductase family. The cofactor is FAD.

It participates in secondary metabolite biosynthesis; terpenoid biosynthesis. Its function is as follows. FAD-dependent monooxygenase; part of the gene cluster that mediates the biosynthesis of the mycotoxin fusaproliferin (FUP) that belongs to the class of bicyclic sesterterpenoids. FUP4 catalyzes the oxidation of the hydroxy group at the C-16 position of preterpestacin III to a keto group, leading to the formation of (-)-terpestacin. The product of FUP1, preterpestacin I, might also serve as a substrate of FUP4 to yield oxo-preterpestacin I. The FUP biosynthetic pathway starts with the enzyme encoded by FUP1 that combines a C-terminal prenyltransferase domain responsible for the synthesis of geranylgeranyl diphosphate with the N-terminal terpene cyclase domain, to yield preterpestacin I. Preterpestacin I is then decorated by oxygenation steps that are catalyzed by two cytochrome P450 monooxygenases. First, FUP2 introduces a hydroxyl group at the C-24 position resulting in the formation of preterpestacin IIa. The second P450 monooxygenase catalyzes the hydroxylation at C-16 and C-17 of preterpestacin IIa, producing preterpestacin III. Subsequently, the FAD-dependent oxidoreductase FUP4 catalyzes the oxidation of the hydroxy group at the C-16 position to a keto group, leading to the formation of (-)-terpestacin, which is the immediate precursor of FUP. The final step in the proposed biosynthetic pathway is the addition of an acetyl group at the C-24 position of terpestacin, which is catalyzed by the acetyltransferase FUP5. The sequence is that of FAD-dependent monooxygenase FUP4 from Fusarium proliferatum (strain ET1) (Orchid endophyte fungus).